The following is a 701-amino-acid chain: Polyribonucleotide nucleotidyltransferase (701 aa).

Positions 487 and 493 each coordinate Mg(2+). One can recognise a KH domain in the interval 554-613 (PTMIAMKIDTDKIRDVIGKGGATIRAICEETKASIDIEDDGSIKIFGESKEAAEAARQRV). The region spanning 623–691 (GKIYIGKVER…NRGRIKLSIK (69 aa)) is the S1 motif domain.

It belongs to the polyribonucleotide nucleotidyltransferase family. Component of the RNA degradosome, which is a multiprotein complex involved in RNA processing and mRNA degradation. Mg(2+) is required as a cofactor.

The protein resides in the cytoplasm. The enzyme catalyses RNA(n+1) + phosphate = RNA(n) + a ribonucleoside 5'-diphosphate. In terms of biological role, involved in mRNA degradation. Catalyzes the phosphorolysis of single-stranded polyribonucleotides processively in the 3'- to 5'-direction. This is Polyribonucleotide nucleotidyltransferase from Pseudomonas syringae pv. syringae (strain B728a).